The sequence spans 519 residues: Transketolase, chloroplastic (519 aa).

D11 provides a ligand contact to Mg(2+). Residues G12 and N41 each contribute to the thiamine diphosphate site. N41 and I43 together coordinate Mg(2+). H118 contributes to the thiamine diphosphate binding site. H118, R212, and S239 together coordinate substrate. 2 residues coordinate thiamine diphosphate: E266 and F293. The active-site Proton donor is the E266. Substrate contacts are provided by H317, D325, and R376.

It belongs to the transketolase family. In terms of assembly, homodimer. Mg(2+) serves as cofactor. Requires Ca(2+) as cofactor. It depends on Mn(2+) as a cofactor. Co(2+) is required as a cofactor. The cofactor is thiamine diphosphate. As to expression, constitutively expressed in leaves and roots.

It is found in the plastid. The protein resides in the chloroplast. The enzyme catalyses D-sedoheptulose 7-phosphate + D-glyceraldehyde 3-phosphate = aldehydo-D-ribose 5-phosphate + D-xylulose 5-phosphate. Catalyzes the transfer of a two-carbon ketol group from a ketose donor to an aldose acceptor, via a covalent intermediate with the cofactor thiamine pyrophosphate. The protein is Transketolase, chloroplastic (TKT3) of Craterostigma plantagineum (Blue gem).